The chain runs to 637 residues: Threonine--tRNA ligase (637 aa).

The TGS domain occupies 1–61; that stretch reads MLNITLPDGS…VEDSAVQIIT (61 aa). Residues 242-533 are catalytic; sequence DHRKLGKQLD…LIENHAGSFP (292 aa). Zn(2+) is bound by residues C333, H384, and H510.

This sequence belongs to the class-II aminoacyl-tRNA synthetase family. Homodimer. It depends on Zn(2+) as a cofactor.

Its subcellular location is the cytoplasm. The catalysed reaction is tRNA(Thr) + L-threonine + ATP = L-threonyl-tRNA(Thr) + AMP + diphosphate + H(+). Catalyzes the attachment of threonine to tRNA(Thr) in a two-step reaction: L-threonine is first activated by ATP to form Thr-AMP and then transferred to the acceptor end of tRNA(Thr). Also edits incorrectly charged L-seryl-tRNA(Thr). The protein is Threonine--tRNA ligase of Neisseria meningitidis serogroup B (strain ATCC BAA-335 / MC58).